The chain runs to 229 residues: uncharacterized protein (229 aa).

7 helical membrane passes run 21-41 (IYSL…LMLY), 56-76 (MIYY…SGAA), 83-103 (ALPI…FIIV), 109-129 (TVFQ…IIGV), 141-161 (AMFA…FIGS), 162-182 (GMMS…LIAS), and 202-222 (WAVA…ISLL).

This sequence belongs to the BI1 family.

The protein localises to the cell membrane. This is an uncharacterized protein from Streptococcus pyogenes serotype M6 (strain ATCC BAA-946 / MGAS10394).